A 543-amino-acid polypeptide reads, in one-letter code: uncharacterized protein (543 aa).

Residues 203 to 460 (NYPYIIAEIE…FLWFKEKVRE (258 aa)) form the Radical SAM core domain. One can recognise a TRAM domain in the interval 470–534 (VVPKGTILRD…RRSITGKVVR (65 aa)).

This is an uncharacterized protein from Methanocaldococcus jannaschii (strain ATCC 43067 / DSM 2661 / JAL-1 / JCM 10045 / NBRC 100440) (Methanococcus jannaschii).